The chain runs to 349 residues: Ferredoxin--NADP reductase 1 (349 aa).

FAD-binding residues include Glu-36, Lys-44, Tyr-48, Val-88, Leu-123, Asp-290, and Ser-331.

This sequence belongs to the ferredoxin--NADP reductase type 2 family. In terms of assembly, homodimer. Requires FAD as cofactor.

The catalysed reaction is 2 reduced [2Fe-2S]-[ferredoxin] + NADP(+) + H(+) = 2 oxidized [2Fe-2S]-[ferredoxin] + NADPH. In Bacillus cereus (strain ATCC 10987 / NRS 248), this protein is Ferredoxin--NADP reductase 1.